The primary structure comprises 499 residues: Argininosuccinate lyase (499 aa).

Residues 1–22 (MSDGEDHETANADDRDETVVRR) form a disordered region. Positions 7 to 22 (HETANADDRDETVVRR) are enriched in basic and acidic residues.

It belongs to the lyase 1 family. Argininosuccinate lyase subfamily.

Its subcellular location is the cytoplasm. The catalysed reaction is 2-(N(omega)-L-arginino)succinate = fumarate + L-arginine. Its pathway is amino-acid biosynthesis; L-arginine biosynthesis; L-arginine from L-ornithine and carbamoyl phosphate: step 3/3. This chain is Argininosuccinate lyase, found in Haloarcula marismortui (strain ATCC 43049 / DSM 3752 / JCM 8966 / VKM B-1809) (Halobacterium marismortui).